The sequence spans 313 residues: Zinc transporter ZitB (313 aa).

At 1-20 (MAHSHSHTSSHLPEDNNARR) the chain is on the cytoplasmic side. Residues 21 to 41 (LLYAFGVTAGFMLVEVVGGFL) form a helical membrane-spanning segment. Topologically, residues 42-47 (SGSLAL) are periplasmic. Residues 48–68 (LADAGHMLTDTAALLFALLAV) form a helical membrane-spanning segment. Residues 69–89 (QFSRRPPTIRHTFGWLRLTTL) are Cytoplasmic-facing. The helical transmembrane segment at 90-110 (AAFVNAIALVVITILIVWEAI) threads the bilayer. Residues 111 to 121 (ERFRTPRPVEG) are Periplasmic-facing. The helical transmembrane segment at 122 to 142 (GMMMAIAVAGLLANILSFWLL) threads the bilayer. The Cytoplasmic segment spans residues 143-159 (HHGSEEKNLNVRAAALH). Residues 160 to 180 (VLGDLLGSVGAIIAALIIIWT) traverse the membrane as a helical segment. Position 181 (Gly181) is a topological domain, periplasmic. A helical membrane pass occupies residues 182–202 (WTPADPILSILVSLLVLRSAW). At 203 to 313 (RLLKDSVNEL…GVSGHSHHHH (111 aa)) the chain is on the cytoplasmic side.

The protein belongs to the cation diffusion facilitator (CDF) transporter (TC 2.A.4) family. SLC30A subfamily.

It is found in the cell inner membrane. Involved in zinc efflux across the cytoplasmic membrane, thus reducing zinc accumulation in the cytoplasm and rendering bacteria more resistant to zinc. It may contribute to zinc homeostasis at low concentrations of zinc. The protein is Zinc transporter ZitB (zitB) of Shigella flexneri.